The following is a 404-amino-acid chain: Acetate kinase (404 aa).

Asn-7 provides a ligand contact to Mg(2+). Position 14 (Lys-14) interacts with ATP. Arg-95 contacts substrate. Asp-152 serves as the catalytic Proton donor/acceptor. Residues His-212–Gly-216, Asp-286–Arg-288, and Gly-334–Asn-338 contribute to the ATP site. Glu-388 lines the Mg(2+) pocket.

The protein belongs to the acetokinase family. As to quaternary structure, homodimer. Requires Mg(2+) as cofactor. Mn(2+) is required as a cofactor.

The protein localises to the cytoplasm. It catalyses the reaction acetate + ATP = acetyl phosphate + ADP. It functions in the pathway metabolic intermediate biosynthesis; acetyl-CoA biosynthesis; acetyl-CoA from acetate: step 1/2. In terms of biological role, catalyzes the formation of acetyl phosphate from acetate and ATP. Can also catalyze the reverse reaction. The protein is Acetate kinase of Nitratidesulfovibrio vulgaris (strain DSM 19637 / Miyazaki F) (Desulfovibrio vulgaris).